We begin with the raw amino-acid sequence, 352 residues long: MKDKVRVAVVGGSGYTGGELLRILVTHPKTEISVITSREYAGKPVSLIHPNLRGLISLNFTNFSIDKISDKADAIFLALPHGVSLNYAPKLLDLGLTVVDLSADFRLKNPELYKIWYNYEHPYPDLLDKAVYGLPELHYEELKNAKLIASPGCNATATILALAPIVATKITDEKKFISDVKVGSSEGGAKPSEGSHHPERQNAIRPYEAEGHRHAAEAEQELSRIAKANISVSIVPHAVSSIRGALASAHTWLTNELEEIEIWKKIAEFYRGKRFIRIIRGNIHPYPDPKFVIGSNFADIGFAVEKRISRLTTFSAIDNLMKGAAGQAVQAFNISMGFNEDDGLKLVPLRPA.

13-16 (SGYT) contributes to the NADP(+) binding site. C153 is an active-site residue. NADP(+) is bound at residue N319.

It belongs to the NAGSA dehydrogenase family. Type 1 subfamily. LysY sub-subfamily.

Its subcellular location is the cytoplasm. The enzyme catalyses [amino-group carrier protein]-C-terminal-N-(1-carboxy-5-oxopentan-1-yl)-L-glutamine + phosphate + NADP(+) = [amino-group carrier protein]-C-terminal-N-(1-carboxy-5-phosphooxy-5-oxopentan-1-yl)-L-glutamine + NADPH + H(+). It carries out the reaction [amino-group carrier protein]-C-terminal-gamma-(L-glutamyl-5-semialdehyde)-L-glutamate + phosphate + NADP(+) = [amino-group carrier protein]-C-terminal-gamma-(5-phospho-L-glutamyl)-L-glutamate + NADPH + H(+). The protein operates within amino-acid biosynthesis; L-lysine biosynthesis via AAA pathway; L-lysine from L-alpha-aminoadipate (Thermus route): step 3/5. It functions in the pathway amino-acid biosynthesis; L-arginine biosynthesis. Involved in both the arginine and lysine biosynthetic pathways. The polypeptide is [LysW]-L-2-aminoadipate/[LysW]-L-glutamate phosphate reductase (Saccharolobus solfataricus (strain ATCC 35092 / DSM 1617 / JCM 11322 / P2) (Sulfolobus solfataricus)).